A 535-amino-acid chain; its full sequence is RAN GTPase-activating protein 1 (535 aa).

The segment at 1-115 is WPP; that stretch reads MDHSAKTTQN…EESEVEVSKD (115 aa). LRR repeat units lie at residues 208–231, 236–259, 264–287, 320–343, 353–376, 377–400, 405–428, 433–456, and 461–488; these read GSKL…AFAS, QHDL…AVRE, TDKI…AIAE, CSHL…ALAK, EIYM…LLKS, APSL…NLAA, KQSL…LIAK, HDQL…ALAQ, and KNTF…MFKD. Residues 493–535 are disordered; sequence LVPLDDNDPEGEDFEDEDEEEEGEDGNELESKLGSLKIKQGEE. Residues 497-520 show a composition bias toward acidic residues; that stretch reads DDNDPEGEDFEDEDEEEEGEDGNE.

The protein belongs to the RNA1 family. In terms of assembly, homodimer. Interacts with WIP1 through its WPP domain. Component of Ran complexes at least composed of WIT1 or WIT2, RANGAP1 or RANGAP2, and WIP1 or WIP2 or WIP3. Interacts directly with WIT1, WIP2 and WIP3. Interacts with POK1.

Its subcellular location is the cytoplasm. The protein resides in the nucleus envelope. The protein localises to the nucleus membrane. It localises to the cytoskeleton. It is found in the spindle. Its subcellular location is the phragmoplast. GTPase activator for the nuclear Ras-related regulatory protein Ran, converting it to the putatively inactive GDP-bound state. Plays a role in spatial signaling during cell division. The chain is RAN GTPase-activating protein 1 (RANGAP1) from Arabidopsis thaliana (Mouse-ear cress).